The primary structure comprises 527 residues: ARS-binding protein 2 (527 aa).

3 disordered regions span residues 160 to 184 (PDVN…HSAS), 219 to 265 (SHHM…NSHN), and 282 to 344 (IDPD…IKRL). A compositionally biased stretch (low complexity) spans 164–177 (SSSISTMRTSTSPS). Positions 225–239 (RGSQQAHQTTPQNHS) are enriched in polar residues. Residues 284–303 (PDWHQWPDDLRDVSSPKESD) are compositionally biased toward basic and acidic residues. Residues S297, S298, and S302 each carry the phosphoserine modification. Residues 328 to 343 (PRKRGRPPGARNKIKR) show a composition bias toward basic residues.

The protein localises to the nucleus. Functionally, binds, preferentially, to the Maundrell ARS consensus sequence within ARS3002. The chain is ARS-binding protein 2 (abp2) from Schizosaccharomyces pombe (strain 972 / ATCC 24843) (Fission yeast).